Consider the following 648-residue polypeptide: Transcription termination factor FttA (648 aa).

The segment at 9 to 76 (DDILKEIREI…ISVRPDPDIL (68 aa)) is KHa. The KHb stretch occupies residues 77–144 (LPPEKAEELI…WAPRVVRTPP (68 aa)). Positions 185 to 395 (WIRITGLGGF…LVMESTYGGS (211 aa)) are metallo-beta-lactamase N-terminus. Zn(2+) contacts are provided by His253, His255, Asp257, His258, His341, and Asp364. The beta-Casp stretch occupies residues 396–589 (NDYQMPREEA…MEVHTIDGFS (194 aa)). The interval 590-648 (GHADRRELMSYVARVRPRPERIITVHGEAHKCLDLSSSIHKKFGISTRAPNNLDAIRLK) is metallo-beta-lactamase C-terminus. His615 lines the Zn(2+) pocket.

This sequence belongs to the metallo-beta-lactamase superfamily. RNA-metabolizing metallo-beta-lactamase-like family. FttA subfamily. As to quaternary structure, homodimer. Probably interacts transiently with RNA polymerase (RNAP), (via at least the RNAP stalk subunits Rpo4 and Rpo7), interacts transiently with the Spt4-Spt5 complex. Requires Zn(2+) as cofactor.

Transcription termination is stimulated by the Spt4-Spt5 complex. Dipicolinic acid inhibits FttA-mediated termination in vitro and inhibits growth in vivo. In terms of biological role, terminates transcription on the whole genome. Termination is linked to FttA-mediated RNA cleavage and does not require NTP hydrolysis. Cleaves endonucleolytically at the RNA exit channel of RNA polymerase (RNAP); the 5'-3' exonuclease activity of this protein degrades the nascent RNA released from RNAP. Facilitates transcription termination; addition of this factor to stalled transcription elongation complexes (TEC) promotes nascent transcript cleavage and releases RNA polymerase (RNAP) from DNA in vitro. Transcription termination competes with productive transcription elongation. Termination is stimulated by C-rich transcripts and inhibited by G-rich transcripts; the Spt4-Spt5 complex enhances termination on C-less transcripts. Yields an approximately 100 nucleotide RNA, consistent with endonucleolytic cleavage at the RNA exit channel of RNAP. The polypeptide is Transcription termination factor FttA (Thermococcus kodakarensis (strain ATCC BAA-918 / JCM 12380 / KOD1) (Pyrococcus kodakaraensis (strain KOD1))).